Reading from the N-terminus, the 586-residue chain is NADH-quinone oxidoreductase subunit C/D 2 (586 aa).

The NADH dehydrogenase I subunit C stretch occupies residues 1–173 (MKWVNKGTVE…RTDPPSHDFE (173 aa)). The interval 197–586 (AELVLNWGPL…LDPVVGETDR (390 aa)) is NADH dehydrogenase I subunit D.

It in the N-terminal section; belongs to the complex I 30 kDa subunit family. This sequence in the C-terminal section; belongs to the complex I 49 kDa subunit family. In terms of assembly, NDH-1 is composed of 13 different subunits. Subunits NuoB, CD, E, F, and G constitute the peripheral sector of the complex.

It localises to the cell inner membrane. The enzyme catalyses a quinone + NADH + 5 H(+)(in) = a quinol + NAD(+) + 4 H(+)(out). Its function is as follows. NDH-1 shuttles electrons from NADH, via FMN and iron-sulfur (Fe-S) centers, to quinones in the respiratory chain. The immediate electron acceptor for the enzyme in this species is believed to be ubiquinone. Couples the redox reaction to proton translocation (for every two electrons transferred, four hydrogen ions are translocated across the cytoplasmic membrane), and thus conserves the redox energy in a proton gradient. This Aquifex aeolicus (strain VF5) protein is NADH-quinone oxidoreductase subunit C/D 2 (nuoC2).